Here is a 357-residue protein sequence, read N- to C-terminus: Putative lipopolysaccharide heptosyltransferase 4 (357 aa).

The catalysed reaction is alpha-D-Glc-(1-&gt;2)-alpha-D-Glc-(1-&gt;3)-[alpha-D-Gal-(1-&gt;6)]-alpha-D-Glc-(1-&gt;3)-[L-alpha-D-Hep-(1-&gt;7)]-4-O-PO3(2-)-L-alpha-D-Hep-(1-&gt;3)-4-O-PO3(2-)-L-alpha-D-Hep-(1-&gt;5)-[alpha-Kdo-(2-&gt;4)]-alpha-Kdo-(2-&gt;6)-lipid A + ADP-L-glycero-beta-D-manno-heptose = lipid A-core + ADP + H(+). The protein operates within bacterial outer membrane biogenesis; LPS core biosynthesis. In terms of biological role, transferase involved in the biosynthesis of the core oligosaccharide region of lipopolysaccharide (LPS). May catalyze the addition of the terminal heptose (heptose IV) to the outer-core glucose III, the last step of the lipid A-core oligosaccharide biosynthesis. This is Putative lipopolysaccharide heptosyltransferase 4 from Escherichia coli (strain K12).